The sequence spans 435 residues: GTPase Obg (435 aa).

Positions 1 to 159 (MAFIDKCKIV…VEVLLELKTI (159 aa)) constitute an Obg domain. An OBG-type G domain is found at 160–329 (ADIGIIGLPN…MLDDVIKIYF (170 aa)). GTP contacts are provided by residues 166 to 173 (GLPNAGKS), 191 to 195 (FTTLN), 212 to 215 (DIPG), 282 to 285 (NKID), and 310 to 312 (SAL). Mg(2+) contacts are provided by Ser173 and Thr193. The OCT domain maps to 357–435 (KSKELDKTIE…IYDITLEFEE (79 aa)).

Belongs to the TRAFAC class OBG-HflX-like GTPase superfamily. OBG GTPase family. As to quaternary structure, monomer. Mg(2+) is required as a cofactor.

Its subcellular location is the cytoplasm. Functionally, an essential GTPase which binds GTP, GDP and possibly (p)ppGpp with moderate affinity, with high nucleotide exchange rates and a fairly low GTP hydrolysis rate. Plays a role in control of the cell cycle, stress response, ribosome biogenesis and in those bacteria that undergo differentiation, in morphogenesis control. The sequence is that of GTPase Obg from Ureaplasma parvum serovar 3 (strain ATCC 27815 / 27 / NCTC 11736).